The sequence spans 580 residues: Thymidine kinase (580 aa).

Disordered stretches follow at residues 1 to 60 (MAEG…KSVK) and 133 to 157 (VCGR…ASMG). Residues 137–149 (PPLPPPNHPPPAT) show a composition bias toward pro residues. Residue 260 to 267 (GVMGVGKS) coordinates ATP. Glu287 functions as the Proton acceptor in the catalytic mechanism. Gln325 contacts substrate. Arg415 provides a ligand contact to ATP. Arg421 serves as a coordination point for substrate.

Belongs to the herpesviridae thymidine kinase family. As to quaternary structure, homodimer.

It carries out the reaction thymidine + ATP = dTMP + ADP + H(+). Catalyzes the transfer of the gamma-phospho group of ATP to thymidine to generate dTMP in the salvage pathway of pyrimidine synthesis. The dTMP serves as a substrate for DNA polymerase during viral DNA replication. Allows the virus to be reactivated and to grow in non-proliferative cells lacking a high concentration of phosphorylated nucleic acid precursors. This Human herpesvirus 8 type P (isolate GK18) (HHV-8) protein is Thymidine kinase.